The sequence spans 399 residues: Argininosuccinate synthase (399 aa).

ATP is bound by residues 10 to 18 (AYSGGVDTS) and Ala38. Tyr89 is an L-citrulline binding site. Gly119 is a binding site for ATP. L-aspartate is bound by residues Thr121, Asn125, and Asp126. Asn125 is an L-citrulline binding site. L-citrulline-binding residues include Arg129, Ser177, Ser186, Glu262, and Tyr274.

The protein belongs to the argininosuccinate synthase family. Type 1 subfamily. Homotetramer.

Its subcellular location is the cytoplasm. The catalysed reaction is L-citrulline + L-aspartate + ATP = 2-(N(omega)-L-arginino)succinate + AMP + diphosphate + H(+). The protein operates within amino-acid biosynthesis; L-arginine biosynthesis; L-arginine from L-ornithine and carbamoyl phosphate: step 2/3. This is Argininosuccinate synthase from Picosynechococcus sp. (strain ATCC 27264 / PCC 7002 / PR-6) (Agmenellum quadruplicatum).